A 420-amino-acid chain; its full sequence is Glutamate dehydrogenase (420 aa).

Lysine 105 is an active-site residue. An NAD(+)-binding site is contributed by 220–226 (GYGNAGY).

Belongs to the Glu/Leu/Phe/Val dehydrogenases family. As to quaternary structure, homohexamer.

Its subcellular location is the cytoplasm. The enzyme catalyses L-glutamate + NAD(+) + H2O = 2-oxoglutarate + NH4(+) + NADH + H(+). It catalyses the reaction L-glutamate + NADP(+) + H2O = 2-oxoglutarate + NH4(+) + NADPH + H(+). The sequence is that of Glutamate dehydrogenase (gdhA) from Pyrococcus endeavori.